An 840-amino-acid polypeptide reads, in one-letter code: Sorting nexin-25 (840 aa).

The region spanning 1–164 is the PXA domain; the sequence is MDRVLRDVFD…MLLRQLEYRE (164 aa). One can recognise an RGS domain in the interval 287–401; it reads QFEDIMTNPF…LVSDLYEKLM (115 aa). Residues 404-437 are disordered; it reads EEEEEPDAQLASEKDELGSGGEAGEEAVEGTSGV. A coiled-coil region spans residues 446-494; it reads IKLRELNEKLEYKRQALSSIQNAPKPDKKIISKLKDEILLIEKECTALQ. Residues 508 to 628 form the PX domain; sequence GLWRASITSA…AFLSPSPDYL (121 aa). Ser-665 carries the phosphoserine modification.

This sequence belongs to the sorting nexin family.

It localises to the endosome membrane. In terms of biological role, may be involved in several stages of intracellular trafficking. The chain is Sorting nexin-25 (Snx25) from Mus musculus (Mouse).